The sequence spans 395 residues: Acetyl-CoA acetyltransferase (395 aa).

Cysteine 90 functions as the Acyl-thioester intermediate in the catalytic mechanism. The CoA site is built by tyrosine 185 and lysine 230. Tyrosine 185 provides a ligand contact to K(+). K(+) is bound by residues alanine 246, alanine 247, and alanine 249. Serine 250 lines the CoA pocket. Residue valine 347 coordinates K(+). Catalysis depends on proton acceptor residues histidine 351 and cysteine 381.

Belongs to the thiolase-like superfamily. Thiolase family. As to quaternary structure, homotetramer.

It localises to the cytoplasm. The catalysed reaction is 2 acetyl-CoA = acetoacetyl-CoA + CoA. The protein operates within metabolic intermediate biosynthesis; (R)-mevalonate biosynthesis; (R)-mevalonate from acetyl-CoA: step 1/3. Its function is as follows. Acetyl-CoA acetyltransferase; part of the first module of ergosterol biosynthesis pathway that includes the early steps of the pathway, conserved across all eukaryotes, and which results in the formation of mevalonate from acetyl-coenzyme A (acetyl-CoA). Erg10 catalyzes the formation of acetoacetyl-CoA from acetyl-CoA. The first module starts with the action of the cytosolic acetyl-CoA acetyltransferase eg10 that catalyzes the formation of acetoacetyl-CoA. The hydroxymethylglutaryl-CoA synthases erg13 then condenses acetyl-CoA with acetoacetyl-CoA to form HMG-CoA. The rate-limiting step of the early module is the reduction to mevalonate by the 3-hydroxy-3-methylglutaryl-coenzyme A (HMG-CoA) reductases hcs1. The polypeptide is Acetyl-CoA acetyltransferase (erg10) (Schizosaccharomyces pombe (strain 972 / ATCC 24843) (Fission yeast)).